Reading from the N-terminus, the 487-residue chain is Cytochrome P450 monooxygenase pyvB (487 aa).

The chain crosses the membrane as a helical span at residues 17 to 37 (PAYSSVVIGALVVCLVCLVWP). Cys-426 serves as a coordination point for heme.

It belongs to the cytochrome P450 family. Requires heme as cofactor.

It localises to the membrane. The protein operates within secondary metabolite biosynthesis. Functionally, cytochrome P450 monooxygenase; part of the gene cluster that mediates the biosynthesis of pyranoviolin A, a pyranonigrin analog with a C-3 methoxy group. Initially, the PKS portion of pyvA synthesizes C-10 carbon chain from 5 molecules of malonyl-CoA, which is then condensed with the thiolation (T) domain-bound glycine activated by the adenylation (A) domain. The subsequent chain release by Dieckmann condensation (DKC) could be catalyzed by the TE domain present at the C-terminus of pyvA and/or the alpha/beta hydrolase pyvD, installing the tetramic acid moiety. The FAD-dependent monooxygenase pyvC next epoxidizes one of the olefins of the polyketide part, and the epoxide ring-opening induces the dihydro-gamma-pyrone ring formation. The cytochrome P450 monooxygeanse pyvB would be responsible for the 2 consecutive reactions, in which the dihydro-gamma-pyrone is oxidized to gamma-pyrone and C-7 is hydroxylated to yield pyranonigrin F. Finally, the O-methyltransferase pyvH methylates the C-3 hydroxy group to complete the biosynthesis. The chain is Cytochrome P450 monooxygenase pyvB from Aspergillus violaceofuscus (strain CBS 115571).